A 104-amino-acid polypeptide reads, in one-letter code: Ribonuclease P protein component 4 (104 aa).

Residues Cys-57, Cys-60, Cys-83, and Cys-86 each coordinate Zn(2+).

This sequence belongs to the eukaryotic/archaeal RNase P protein component 4 family. Consists of a catalytic RNA component and at least 4-5 protein subunits. It depends on Zn(2+) as a cofactor.

The protein resides in the cytoplasm. It carries out the reaction Endonucleolytic cleavage of RNA, removing 5'-extranucleotides from tRNA precursor.. Functionally, part of ribonuclease P, a protein complex that generates mature tRNA molecules by cleaving their 5'-ends. In Saccharolobus islandicus (strain M.14.25 / Kamchatka #1) (Sulfolobus islandicus), this protein is Ribonuclease P protein component 4.